Here is a 120-residue protein sequence, read N- to C-terminus: MRVKGGSVTRQRRKRWLEKAEGSWGTRNTSYRIARQTVIRAAEYAYRDRRNKKRDFRKLWISRINAAVRELGYTYSQFMNALVKANVVTKDGQGLNRKMLSELAINNPEAFNQLVNKVMK.

The protein belongs to the bacterial ribosomal protein bL20 family.

Binds directly to 23S ribosomal RNA and is necessary for the in vitro assembly process of the 50S ribosomal subunit. It is not involved in the protein synthesizing functions of that subunit. This chain is Large ribosomal subunit protein bL20, found in Ureaplasma urealyticum serovar 10 (strain ATCC 33699 / Western).